A 283-amino-acid chain; its full sequence is MKQYLDLCQRIVDEGTWIENERTGKRCLTVINADLTYDVENGVFPLVTTRKSFWKAAVAEMIGYIRGYDSAEDFRKIGTKTWDANANLNDAWLNNPHRKGDDDMGRVYGVQGRSWAKPNGEFVDQLKKIIDDLSQGIDDRGEILNFYNPGEFDMGCLRPCMYSHHFSLLGDTLYLNSTQRSCDVPLGLNFNMVQVYFLLAIVAQITGHKAGKAYHKIVNAHIYEDQLELMQSVQLKREPLQAPIFKINPEIKSLEDLETWVTMDDFEVIGYESHEAIKYPFSV.

Arginine 22 provides a ligand contact to dUMP. The active-site Nucleophile is the cysteine 160. Residues 180–183 (RSCD), asparagine 191, and 221–223 (HIY) each bind dUMP. (6R)-5,10-methylene-5,6,7,8-tetrahydrofolate is bound at residue aspartate 183. (6R)-5,10-methylene-5,6,7,8-tetrahydrofolate is bound at residue serine 282.

It belongs to the thymidylate synthase family. Bacterial-type ThyA subfamily. Homodimer.

Its subcellular location is the cytoplasm. The catalysed reaction is dUMP + (6R)-5,10-methylene-5,6,7,8-tetrahydrofolate = 7,8-dihydrofolate + dTMP. Its pathway is pyrimidine metabolism; dTTP biosynthesis. Its function is as follows. Catalyzes the reductive methylation of 2'-deoxyuridine-5'-monophosphate (dUMP) to 2'-deoxythymidine-5'-monophosphate (dTMP) while utilizing 5,10-methylenetetrahydrofolate (mTHF) as the methyl donor and reductant in the reaction, yielding dihydrofolate (DHF) as a by-product. This enzymatic reaction provides an intracellular de novo source of dTMP, an essential precursor for DNA biosynthesis. This chain is Thymidylate synthase, found in Aliivibrio fischeri (strain ATCC 700601 / ES114) (Vibrio fischeri).